Here is a 124-residue protein sequence, read N- to C-terminus: MKVLILVLLGVVILQAAPIRKLEDLLPTRNPPQNELVYWCTYANQCDFCWECIHGICRNRIQADWPVIHQNDWIINCTVSRWNGICRYYEGPRGHIDHEMDCANPTYHTYPHIEYMKIYVRDDL.

Positions 1–16 (MKVLILVLLGVVILQA) are cleaved as a signal peptide. N-linked (GlcNAc...) asparagine; by host glycosylation occurs at N76.

It belongs to the asfivirus MGF 110 family.

Its function is as follows. Plays a role in virus cell tropism, and may be required for efficient virus replication in macrophages. In African swine fever virus (isolate Pig/Kenya/KEN-50/1950) (ASFV), this protein is Protein MGF 110-8L.